Reading from the N-terminus, the 207-residue chain is dTTP/UTP pyrophosphatase (207 aa).

Aspartate 87 functions as the Proton acceptor in the catalytic mechanism.

Belongs to the Maf family. YhdE subfamily. Requires a divalent metal cation as cofactor.

The protein resides in the cytoplasm. It catalyses the reaction dTTP + H2O = dTMP + diphosphate + H(+). It carries out the reaction UTP + H2O = UMP + diphosphate + H(+). In terms of biological role, nucleoside triphosphate pyrophosphatase that hydrolyzes dTTP and UTP. May have a dual role in cell division arrest and in preventing the incorporation of modified nucleotides into cellular nucleic acids. In Nitrosomonas europaea (strain ATCC 19718 / CIP 103999 / KCTC 2705 / NBRC 14298), this protein is dTTP/UTP pyrophosphatase.